Consider the following 485-residue polypeptide: UDP-N-acetylmuramoyl-L-alanyl-D-glutamate--2,6-diaminopimelate ligase (485 aa).

Ser32 lines the UDP-N-acetyl-alpha-D-muramoyl-L-alanyl-D-glutamate pocket. 111 to 117 (GTNGKTT) contacts ATP. UDP-N-acetyl-alpha-D-muramoyl-L-alanyl-D-glutamate contacts are provided by residues 153 to 154 (TT), Ser180, and Arg188. Lys220 carries the post-translational modification N6-carboxylysine. Meso-2,6-diaminopimelate contacts are provided by residues Arg382, 405–408 (DNPR), Gly455, and Glu459. The Meso-diaminopimelate recognition motif motif lies at 405–408 (DNPR).

It belongs to the MurCDEF family. MurE subfamily. Mg(2+) is required as a cofactor. Carboxylation is probably crucial for Mg(2+) binding and, consequently, for the gamma-phosphate positioning of ATP.

It is found in the cytoplasm. It catalyses the reaction UDP-N-acetyl-alpha-D-muramoyl-L-alanyl-D-glutamate + meso-2,6-diaminopimelate + ATP = UDP-N-acetyl-alpha-D-muramoyl-L-alanyl-gamma-D-glutamyl-meso-2,6-diaminopimelate + ADP + phosphate + H(+). It participates in cell wall biogenesis; peptidoglycan biosynthesis. In terms of biological role, catalyzes the addition of meso-diaminopimelic acid to the nucleotide precursor UDP-N-acetylmuramoyl-L-alanyl-D-glutamate (UMAG) in the biosynthesis of bacterial cell-wall peptidoglycan. In Chlamydia felis (strain Fe/C-56) (Chlamydophila felis), this protein is UDP-N-acetylmuramoyl-L-alanyl-D-glutamate--2,6-diaminopimelate ligase.